The following is a 95-amino-acid chain: uncharacterized protein (95 aa).

This is an uncharacterized protein from Methanocaldococcus jannaschii (strain ATCC 43067 / DSM 2661 / JAL-1 / JCM 10045 / NBRC 100440) (Methanococcus jannaschii).